Consider the following 911-residue polypeptide: MPVVSLAKVVTSPAVAGDLAVRVPFIYGKRLVSNRVSFGKLRRRSCIGQCVRSELQSPRVLGSVTDLALDNSVENGHLPKGDSWAVHKFGGTCVGNSERIKDVAAVVVKDDSERKLVVVSAMSKVTDMMYDLIHRAESRDDSYLSALSGVLEKHRATAVDLLDGDELSSFLARLNDDINNLKAMLRAIYIAGHATESFSDFVVGHGELWSAQMLAAVVRKSGLDCTWMDARDVLVVIPTSSNQVDPDFVESEKRLEKWFTQNSAKIIIATGFIASTPQNIPTTLKRDGSDFSAAIMSALFRSHQLTIWTDVDGVYSADPRKVSEAVVLKTLSYQEAWEMSYFGANVLHPRTIIPVMKYDIPIVIRNIFNLSAPGTMICRQIDDEDGFKLDAPVKGFATIDNLALVNVEGTGMAGVPGTASAIFSAVKEVGANVIMISQASSEHSVCFAVPEKEVKAVSEALNSRFRQALAGGRLSQIEIIPNCSILAAVGQKMASTPGVSATFFNALAKANINIRAIAQGCSEFNITVVVKREDCIRALRAVHSRFYLSRTTLAVGIIGPGLIGGTLLDQIRDQAAVLKEEFKIDLRVIGITGSSKMLMSESGIDLSRWRELMKEEGEKADMEKFTQYVKGNHFIPNSVMVDCTADADIASCYYDWLLRGIHVVTPNKKANSGPLDQYLKIRDLQRKSYTHYFYEATVGAGLPIISTLRGLLETGDKILRIEGIFSGTLSYLFNNFVGTRSFSEVVAEAKQAGFTEPDPRDDLSGTDVARKVTILARESGLKLDLEGLPVQNLVPKPLQACASAEEFMEKLPQFDEELSKQREEAEAAGEVLRYVGVVDAVEKKGTVELKRYKKDHPFAQLSGADNIIAFTTKRYKEQPLIVRGPGAGAQVTAGGIFSDILRLAFYLGAPS.

The N-terminal 82 residues, 1–82, are a transit peptide targeting the chloroplast; sequence MPVVSLAKVV…VENGHLPKGD (82 aa). The aspartokinase stretch occupies residues 83–331; that stretch reads SWAVHKFGGT…VSEAVVLKTL (249 aa). An interface region spans residues 332–557; it reads SYQEAWEMSY…LSRTTLAVGI (226 aa). 2 ACT domains span residues 407–482 and 488–565; these read VEGT…IIPN and AVGQ…LIGG. The tract at residues 558–911 is homoserine dehydrogenase; that stretch reads IGPGLIGGTL…RLAFYLGAPS (354 aa). NAD(+)-binding residues include isoleucine 563 and threonine 644. Residues isoleucine 563, threonine 644, and lysine 668 each contribute to the NADP(+) site. NADPH contacts are provided by isoleucine 563, threonine 644, and lysine 668. Na(+) is bound by residues glutamate 695, valine 698, alanine 700, and leucine 702. 2 residues coordinate NADP(+): glycine 753 and glutamate 756. L-homoserine contacts are provided by glutamate 756 and aspartate 767. Residue lysine 771 is the Proton donor of the active site. Glycine 888 contacts NAD(+). NADP(+) is bound at residue glycine 888. Glycine 888 serves as a coordination point for NADPH.

It in the N-terminal section; belongs to the aspartokinase family. In the C-terminal section; belongs to the homoserine dehydrogenase family. As to quaternary structure, homo- or heterodimer. Requires a metal cation as cofactor.

It localises to the plastid. It is found in the chloroplast. It catalyses the reaction L-homoserine + NADP(+) = L-aspartate 4-semialdehyde + NADPH + H(+). The enzyme catalyses L-homoserine + NAD(+) = L-aspartate 4-semialdehyde + NADH + H(+). It carries out the reaction L-aspartate + ATP = 4-phospho-L-aspartate + ADP. It functions in the pathway amino-acid biosynthesis; L-lysine biosynthesis via DAP pathway; (S)-tetrahydrodipicolinate from L-aspartate: step 1/4. It participates in amino-acid biosynthesis; L-methionine biosynthesis via de novo pathway; L-homoserine from L-aspartate: step 1/3. The protein operates within amino-acid biosynthesis; L-methionine biosynthesis via de novo pathway; L-homoserine from L-aspartate: step 3/3. Its pathway is amino-acid biosynthesis; L-threonine biosynthesis; L-threonine from L-aspartate: step 1/5. It functions in the pathway amino-acid biosynthesis; L-threonine biosynthesis; L-threonine from L-aspartate: step 3/5. Its activity is regulated as follows. Inhibition of aspartate kinase activity by threonine and leucine and 3-fold activation by cysteine, isoleucine, valine, serine and alanine at 2.5 mM. Partial inhibition of homoserine dehydrogenase activity by threonine and cysteine (14% of activity remaining at saturation with either amino acid). No synergy between the effectors for both activation or inhibition. Its function is as follows. Bifunctional aspartate kinase and homoserine dehydrogenase that catalyzes the first and the third steps toward the synthesis of lysine, methionine and threonine from aspartate. In Arabidopsis thaliana (Mouse-ear cress), this protein is Bifunctional aspartokinase/homoserine dehydrogenase 1, chloroplastic.